Here is a 113-residue protein sequence, read N- to C-terminus: Large ribosomal subunit protein bL19 (113 aa).

It belongs to the bacterial ribosomal protein bL19 family.

In terms of biological role, this protein is located at the 30S-50S ribosomal subunit interface and may play a role in the structure and function of the aminoacyl-tRNA binding site. The polypeptide is Large ribosomal subunit protein bL19 (Mycobacterium leprae (strain Br4923)).